The following is a 70-amino-acid chain: Guanine nucleotide-binding protein G(I)/G(S)/G(O) subunit gamma-8 (70 aa).

The residue at position 67 (Cys67) is a Cysteine methyl ester. A lipid anchor (S-geranylgeranyl cysteine) is attached at Cys67. A propeptide spans 68–70 (VLL) (removed in mature form).

It belongs to the G protein gamma family. In terms of assembly, g proteins are composed of 3 units, alpha, beta and gamma.

Its subcellular location is the cell membrane. Guanine nucleotide-binding proteins (G proteins) are involved as a modulator or transducer in various transmembrane signaling systems. The beta and gamma chains are required for the GTPase activity, for replacement of GDP by GTP, and for G protein-effector interaction. The sequence is that of Guanine nucleotide-binding protein G(I)/G(S)/G(O) subunit gamma-8 (GNG8) from Homo sapiens (Human).